The primary structure comprises 465 residues: 23S rRNA (uracil(1939)-C(5))-methyltransferase RlmD (465 aa).

Residues 1-22 (MSEAVPTSARKSKNAPVAPGPA) form a disordered region. The TRAM domain occupies 16 to 80 (PVAPGPAPVL…PSYEQATVVD (65 aa)). 4 residues coordinate [4Fe-4S] cluster: cysteine 93, cysteine 99, cysteine 102, and cysteine 181. Residues glutamine 289, phenylalanine 318, asparagine 323, glutamate 339, asparagine 367, and aspartate 388 each contribute to the S-adenosyl-L-methionine site. The Nucleophile role is filled by cysteine 421.

It belongs to the class I-like SAM-binding methyltransferase superfamily. RNA M5U methyltransferase family. RlmD subfamily.

It carries out the reaction uridine(1939) in 23S rRNA + S-adenosyl-L-methionine = 5-methyluridine(1939) in 23S rRNA + S-adenosyl-L-homocysteine + H(+). Functionally, catalyzes the formation of 5-methyl-uridine at position 1939 (m5U1939) in 23S rRNA. This Burkholderia ambifaria (strain ATCC BAA-244 / DSM 16087 / CCUG 44356 / LMG 19182 / AMMD) (Burkholderia cepacia (strain AMMD)) protein is 23S rRNA (uracil(1939)-C(5))-methyltransferase RlmD.